The primary structure comprises 546 residues: Chaperonin GroEL 1 (546 aa).

Residues 30 to 33, lysine 51, 87 to 91, glycine 415, 479 to 481, and aspartate 495 each bind ATP; these read TLGP, DGTTT, and NAA. The tract at residues 526-546 is disordered; the sequence is KEDAPMPGGMPGGMGGMGMDM. The span at 534-546 shows a compositional bias: gly residues; that stretch reads GMPGGMGGMGMDM.

It belongs to the chaperonin (HSP60) family. As to quaternary structure, forms a cylinder of 14 subunits composed of two heptameric rings stacked back-to-back. Interacts with the co-chaperonin GroES.

It is found in the cytoplasm. It catalyses the reaction ATP + H2O + a folded polypeptide = ADP + phosphate + an unfolded polypeptide.. Functionally, together with its co-chaperonin GroES, plays an essential role in assisting protein folding. The GroEL-GroES system forms a nano-cage that allows encapsulation of the non-native substrate proteins and provides a physical environment optimized to promote and accelerate protein folding. This chain is Chaperonin GroEL 1, found in Burkholderia pseudomallei (strain 1106a).